A 196-amino-acid chain; its full sequence is Shikimate kinase (196 aa).

Residue Gly32–Ala37 participates in ATP binding. Ser36 lines the Mg(2+) pocket. Substrate-binding residues include Asp54, Arg78, and Gly100. Residue Arg138 participates in ATP binding. Arg157 contributes to the substrate binding site. Arg174 provides a ligand contact to ATP.

It belongs to the shikimate kinase family. As to quaternary structure, monomer. It depends on Mg(2+) as a cofactor.

It is found in the cytoplasm. The enzyme catalyses shikimate + ATP = 3-phosphoshikimate + ADP + H(+). It functions in the pathway metabolic intermediate biosynthesis; chorismate biosynthesis; chorismate from D-erythrose 4-phosphate and phosphoenolpyruvate: step 5/7. Its function is as follows. Catalyzes the specific phosphorylation of the 3-hydroxyl group of shikimic acid using ATP as a cosubstrate. This is Shikimate kinase from Rhizobium leguminosarum bv. trifolii (strain WSM2304).